An 857-amino-acid polypeptide reads, in one-letter code: MQEQYNPQDIEQKVQQHWDNNKTFVVTEDPTKEKFYCLSMFPYPSGRLHMGHVRNYTIGDVVSRFQRLQGKNVMQPIGWDAFGLPAENAAVKNNTAPAPWTYENIEYMKNQLKLLGFGYDWNREFATCTPEYYRWEQEFFTKLYEKGLVYKKTSSVNWCPNDQTVLANEQVEDGCCWRCDTPVEQKEIPQWFIKITEYAQELLDDLDKLEGWPEMVKTMQRNWIGRSEGVELKFEVKGQQDLEVYTTRPDTLMGVTYVGIAAGHPLAKIAAENNPELAAFIEECKNTKVAEAELATMEKKGMATGLTAIHPLNGREVPVYVANFVLMDYGTGAVMAVPAHDQRDFEFATKYGLDIIPVIKPIDGSELDISEAAYTEKGVLFDSGEFDGLEFQAAFDAIAAKLEAEGKGTKTVNFRLRDWGVSRQRYWGAPIPMVTTEDGQVHPVPADQLPVILPEDVVMDGVTSPIKADKEWAKTTFNGEPALRETDTFDTFMESSWYYARYCSPQADDILDPEKANYWLPVDQYIGGIEHACMHLLYSRFFHKLLRDAGYVTSDEPFKQLLCQGMVLADAFYYTNDKGGKEWVSPTEVKVERDGKGRITSAVDNEGRNVEHSGMIKMSKSKNNGIDPQEMVDKYGADTVRLFMMFASPADMTLEWQESGVEGANRFLKRVWKLVNEHTSKGAAEAVDAAALSGDQKALRRDVHKTIAKVTDDVARRQTFNTAIAAVMELMNKLAKAPQESAQDRAILDEALKAVVAMLYPITPHICFEMWTALGQQDIDNASWPTYDEQALVEDEKLIVVQVNGKVRGKITVAADATKEQVEEIGLNEENVSKHLDGVTIRKVIYVPGKLLSIVAN.

Positions 42–52 (PYPSGRLHMGH) match the 'HIGH' region motif. Positions 617-621 (KMSKS) match the 'KMSKS' region motif. Lys620 contributes to the ATP binding site.

This sequence belongs to the class-I aminoacyl-tRNA synthetase family.

The protein resides in the cytoplasm. The catalysed reaction is tRNA(Leu) + L-leucine + ATP = L-leucyl-tRNA(Leu) + AMP + diphosphate. The sequence is that of Leucine--tRNA ligase from Vibrio vulnificus (strain CMCP6).